Consider the following 457-residue polypeptide: MLKIFNTLTRQKEEFKPIHAGKVGMYVCGITVYDLCHIGHGRTFVAFDVVTRYLRYRGYEVNYVRNITDIEDKIIRRAAENGETFHQLTERMISEMHSDFDQLNILRPDQEPRATHYIDAIIELVGQLIDRDHAYVAANGDVMFAVDSDSDYGLLSRQDLEQLQAGARVEVADVKRNPMDFVLWKMSKPGEPSWPSPWGDGRPGWHIECSAMNGRQLGHHFDIHGGGSDLIFPHHENEIAQSTCAHDGPYVNVWMHAGMVMVDREKMSKSLGNFFTVRDVLRYYDAETVRYFLMSGHYRSQLNYSEENLKQARSALERLYIALRGTDATAVPAGGDHFVAQFIAAMDDDFNTPKAYSVLFDIAREVNRLKSEQPAAQGMAATLRQLAGVLGLLEQEPAAFLQQGAAEDNVMIEALIQQRNDARKARQWALADEARDKLTALGIVLEDGPQGTTWRRC.

A Zn(2+)-binding site is contributed by Cys-28. Positions 30-40 match the 'HIGH' region motif; sequence ITVYDLCHIGH. Zn(2+) contacts are provided by Cys-209, His-234, and Glu-238. A 'KMSKS' region motif is present at residues 266–270; that stretch reads KMSKS. Lys-269 contacts ATP.

It belongs to the class-I aminoacyl-tRNA synthetase family. In terms of assembly, monomer. The cofactor is Zn(2+).

The protein localises to the cytoplasm. The enzyme catalyses tRNA(Cys) + L-cysteine + ATP = L-cysteinyl-tRNA(Cys) + AMP + diphosphate. This is Cysteine--tRNA ligase from Sodalis glossinidius (strain morsitans).